A 224-amino-acid chain; its full sequence is 7-cyano-7-deazaguanine synthase (224 aa).

10-20 (LSGGLDSATVV) is a binding site for ATP. Residues cysteine 189, cysteine 199, cysteine 202, and cysteine 205 each coordinate Zn(2+).

It belongs to the QueC family. The cofactor is Zn(2+).

The catalysed reaction is 7-carboxy-7-deazaguanine + NH4(+) + ATP = 7-cyano-7-deazaguanine + ADP + phosphate + H2O + H(+). It functions in the pathway purine metabolism; 7-cyano-7-deazaguanine biosynthesis. In terms of biological role, catalyzes the ATP-dependent conversion of 7-carboxy-7-deazaguanine (CDG) to 7-cyano-7-deazaguanine (preQ(0)). The polypeptide is 7-cyano-7-deazaguanine synthase (Pseudomonas putida (strain ATCC 700007 / DSM 6899 / JCM 31910 / BCRC 17059 / LMG 24140 / F1)).